The following is a 169-amino-acid chain: Probable calcium-binding protein CML20 (169 aa).

Residues 1 to 23 are disordered; that stretch reads MSSIYRTVSRKEKPRRHHGLTTQ. EF-hand domains are found at residues 23–58, 59–94, 96–131, and 132–167; these read QKKQ…LGFE, MTEE…KIGE, DTKE…LGEN, and FTDA…TAYG. 19 residues coordinate Ca(2+): D36, D38, S40, T42, E47, D72, D74, S76, E83, D109, D111, N113, K115, D120, D145, D147, D149, E151, and E156.

Interacts with TON1A and TON1B. Interacts with SAC3A and SAC3B. Interacts with UCH1 and UCH2.

Its function is as follows. Potential calcium sensor. This chain is Probable calcium-binding protein CML20, found in Arabidopsis thaliana (Mouse-ear cress).